The primary structure comprises 129 residues: Protein GLUTAMINE DUMPER 2 (129 aa).

Residues 1–34 are Extracellular-facing; it reads MQTMEGRQYNYQDSINASSSMVVPHSPWHSPVPY. A helical transmembrane segment spans residues 35–55; the sequence is LFGGLAAMLALICVALLILAC. At 56–129 the chain is on the cytoplasmic side; sequence SYWRLSGSAE…DHNEEEGRRG (74 aa). The interval 66 to 89 is disordered; sequence RDLEAGDDAKPDNDTNKTKHTEMP. A VIMAG motif is present at residues 94–98; that stretch reads VIMAG. Residues 106 to 129 form a disordered region; the sequence is ATPATRSEQSCTCGDHNEEEGRRG. Residues 120–129 are compositionally biased toward basic and acidic residues; sequence DHNEEEGRRG.

It belongs to the GLUTAMINE DUMPER 1 (TC 9.B.60) family. In terms of tissue distribution, expressed in the vascular tissues.

The protein localises to the membrane. In terms of biological role, probable subunit of an amino acid transporter involved in the regulation of the amino acid metabolism. Stimulates amino acid export by activating nonselective amino acid facilitators. The polypeptide is Protein GLUTAMINE DUMPER 2 (GDU2) (Arabidopsis thaliana (Mouse-ear cress)).